Consider the following 565-residue polypeptide: Hemagglutinin-neuraminidase (565 aa).

Residues 1 to 19 (MVAEDAPVRGTCRVLFRTT) lie on the Intravirion side of the membrane. Residues 20–40 (TLLFLCTLLSLSISILYESLI) traverse the membrane as a helical segment. Over 41–565 (TQNQIMSQAG…VPFIRQVTLS (525 aa)) the chain is Virion surface. N-linked (GlcNAc...) asparagine; by host glycosylation is found at Asn110 and Asn139. 3 disulfide bridges follow: Cys161/Cys185, Cys175/Cys236, and Cys227/Cys240. Positions 223–228 (NRKSCS) are involved in neuraminidase activity. N-linked (GlcNAc...) asparagine; by host glycosylation occurs at Asn267. Cystine bridges form between Cys333-Cys454, Cys365-Cys375, and Cys448-Cys458. N-linked (GlcNAc...) asparagine; by host glycosylation occurs at Asn504. A disulfide bridge connects residues Cys528 and Cys539.

This sequence belongs to the paramyxoviruses hemagglutinin-neuraminidase family. In terms of assembly, homotetramer; composed of disulfide-linked homodimers. Interacts with F protein trimer.

The protein resides in the virion membrane. The protein localises to the host cell membrane. It carries out the reaction Hydrolysis of alpha-(2-&gt;3)-, alpha-(2-&gt;6)-, alpha-(2-&gt;8)- glycosidic linkages of terminal sialic acid residues in oligosaccharides, glycoproteins, glycolipids, colominic acid and synthetic substrates.. Functionally, attaches the virus to sialic acid-containing cell receptors and thereby initiating infection. Binding of HN protein to the receptor induces a conformational change that allows the F protein to trigger virion/cell membranes fusion. Its function is as follows. Neuraminidase activity ensures the efficient spread of the virus by dissociating the mature virions from the neuraminic acid containing glycoproteins. The sequence is that of Hemagglutinin-neuraminidase (HN) from Canis lupus familiaris (Dog).